Here is a 217-residue protein sequence, read N- to C-terminus: Large ribosomal subunit protein uL29m (217 aa).

The protein belongs to the universal ribosomal protein uL29 family. Component of the mitochondrial large ribosomal subunit. Mature mitochondrial ribosomes consist of a small (37S) and a large (54S) subunit. The 37S subunit contains at least 33 different proteins and 1 molecule of RNA (15S). The 54S subunit contains at least 45 different proteins and 1 molecule of RNA (21S).

The protein localises to the mitochondrion. This is Large ribosomal subunit protein uL29m (mrpl4) from Aspergillus clavatus (strain ATCC 1007 / CBS 513.65 / DSM 816 / NCTC 3887 / NRRL 1 / QM 1276 / 107).